The sequence spans 220 residues: 7-cyano-7-deazaguanine synthase (220 aa).

10–20 serves as a coordination point for ATP; the sequence is FSGGQDSTTCL. The Zn(2+) site is built by Cys186, Cys195, Cys198, and Cys201.

This sequence belongs to the QueC family. As to quaternary structure, homodimer. Requires Zn(2+) as cofactor.

The enzyme catalyses 7-carboxy-7-deazaguanine + NH4(+) + ATP = 7-cyano-7-deazaguanine + ADP + phosphate + H2O + H(+). It functions in the pathway purine metabolism; 7-cyano-7-deazaguanine biosynthesis. Catalyzes the ATP-dependent conversion of 7-carboxy-7-deazaguanine (CDG) to 7-cyano-7-deazaguanine (preQ(0)). The protein is 7-cyano-7-deazaguanine synthase of Bacillus cereus (strain B4264).